A 564-amino-acid chain; its full sequence is Alpha-farnesene synthase (564 aa).

Mg(2+)-binding residues include D313, D317, T464, and E468. Positions D313–D317 match the DDXXD motif motif.

It belongs to the terpene synthase family. It depends on Mg(2+) as a cofactor.

The enzyme catalyses (2E,6E)-farnesyl diphosphate = (3E,6E)-alpha-farnesene + diphosphate. In terms of biological role, catalyzes the cyclization of farnesyl diphosphate to (E,E)-alpha-farnesene. This chain is Alpha-farnesene synthase (TPS7), found in Ricinus communis (Castor bean).